Reading from the N-terminus, the 804-residue chain is E3 ubiquitin-protein ligase RNF10 (804 aa).

Composition is skewed to low complexity over residues 1–31, 78–90, and 104–113; these read MPQS…SGSS, SNQS…QKSK, and SKPFSSSSNG. The disordered stretch occupies residues 1-134; it reads MPQSSPSAAA…AEFSPAQFSG (134 aa). S5 is modified (phosphoserine). S110 bears the Phosphoserine mark. Over residues 114–124 the composition is skewed to basic and acidic residues; the sequence is GRRDEVAEAQR. A Phosphoserine modification is found at S128. An RING-type zinc finger spans residues 225-267; sequence CPICLYPPTAAKITRCGHIFCWACILHYLSLSEKTWSKCPICY. Disordered stretches follow at residues 589–611, 646–665, and 715–804; these read DIEK…ERRI, DSAL…LSPL, and KADG…VHTK. Residues 601–611 are compositionally biased toward basic and acidic residues; the sequence is AREERRRERRI. Polar residues predominate over residues 646-655; it reads DSALGPTSTE. Residues 715–729 show a composition bias toward basic and acidic residues; the sequence is KADGWPKTAPKKDDN. Over residues 795-804 the composition is skewed to polar residues; the sequence is LFSTSVVHTK.

Belongs to the RNF10 family. As to quaternary structure, interacts with MEOX2.

The protein resides in the cytoplasm. It localises to the nucleus. It catalyses the reaction S-ubiquitinyl-[E2 ubiquitin-conjugating enzyme]-L-cysteine + [acceptor protein]-L-lysine = [E2 ubiquitin-conjugating enzyme]-L-cysteine + N(6)-ubiquitinyl-[acceptor protein]-L-lysine.. Its pathway is protein modification; protein ubiquitination. In terms of biological role, E3 ubiquitin-protein ligase that catalyzes monoubiquitination of 40S ribosomal proteins RPS2/us5 and RPS3/us3 in response to ribosome stalling. Part of a ribosome quality control that takes place when ribosomes have stalled during translation initiation (iRQC): RNF10 acts by mediating monoubiquitination of RPS2/us5 and RPS3/us3, promoting their degradation by the proteasome. Also promotes ubiquitination of 40S ribosomal proteins in response to ribosome stalling during translation elongation. The action of RNF10 in iRQC is counteracted by USP10. May also act as a transcriptional factor involved in the regulation of MAG (Myelin-associated glycoprotein) expression. Acts as a regulator of Schwann cell differentiation and myelination. The sequence is that of E3 ubiquitin-protein ligase RNF10 from Mus musculus (Mouse).